Consider the following 278-residue polypeptide: Pantothenate synthetase (278 aa).

27 to 34 contacts ATP; the sequence is MGNLHEGH. The Proton donor role is filled by H34. Q58 serves as a coordination point for (R)-pantoate. Q58 is a binding site for beta-alanine. ATP is bound at residue 147 to 150; it reads GEKD. Q153 is a binding site for (R)-pantoate. 184–187 lines the ATP pocket; it reads YSSR.

The protein belongs to the pantothenate synthetase family. As to quaternary structure, homodimer.

It is found in the cytoplasm. The catalysed reaction is (R)-pantoate + beta-alanine + ATP = (R)-pantothenate + AMP + diphosphate + H(+). It participates in cofactor biosynthesis; (R)-pantothenate biosynthesis; (R)-pantothenate from (R)-pantoate and beta-alanine: step 1/1. Its function is as follows. Catalyzes the condensation of pantoate with beta-alanine in an ATP-dependent reaction via a pantoyl-adenylate intermediate. This chain is Pantothenate synthetase, found in Acidithiobacillus ferrooxidans (strain ATCC 23270 / DSM 14882 / CIP 104768 / NCIMB 8455) (Ferrobacillus ferrooxidans (strain ATCC 23270)).